We begin with the raw amino-acid sequence, 72 residues long: Long neurotoxin OH-5 (72 aa).

5 disulfides stabilise this stretch: Cys3-Cys22, Cys15-Cys43, Cys28-Cys32, Cys47-Cys58, and Cys59-Cys64.

This sequence belongs to the three-finger toxin family. Long-chain subfamily. Type II alpha-neurotoxin sub-subfamily. In terms of tissue distribution, expressed by the venom gland.

It localises to the secreted. In terms of biological role, binds with high affinity to muscular (alpha-1/CHRNA1) and neuronal (alpha-7/CHRNA7) nicotinic acetylcholine receptor (nAChR) and inhibits acetylcholine from binding to the receptor, thereby impairing neuromuscular and neuronal transmission. This chain is Long neurotoxin OH-5, found in Ophiophagus hannah (King cobra).